Reading from the N-terminus, the 472-residue chain is Sulfate adenylyltransferase subunit 1 (472 aa).

Positions 22 to 239 (KELLRFLTCG…TVPIAGDKNY (218 aa)) constitute a tr-type G domain. Positions 31–38 (GSVDDGKS) are G1. GTP is bound at residue 31–38 (GSVDDGKS). The G2 stretch occupies residues 89–93 (GITID). The G3 stretch occupies residues 110 to 113 (DTPG). GTP-binding positions include 110–114 (DTPGH) and 165–168 (NKMD). Residues 165 to 168 (NKMD) are G4. A G5 region spans residues 202 to 204 (SAL).

The protein belongs to the TRAFAC class translation factor GTPase superfamily. Classic translation factor GTPase family. CysN/NodQ subfamily. Heterodimer composed of CysD, the smaller subunit, and CysN.

The catalysed reaction is sulfate + ATP + H(+) = adenosine 5'-phosphosulfate + diphosphate. It functions in the pathway sulfur metabolism; hydrogen sulfide biosynthesis; sulfite from sulfate: step 1/3. Its function is as follows. With CysD forms the ATP sulfurylase (ATPS) that catalyzes the adenylation of sulfate producing adenosine 5'-phosphosulfate (APS) and diphosphate, the first enzymatic step in sulfur assimilation pathway. APS synthesis involves the formation of a high-energy phosphoric-sulfuric acid anhydride bond driven by GTP hydrolysis by CysN coupled to ATP hydrolysis by CysD. This is Sulfate adenylyltransferase subunit 1 from Cellvibrio japonicus (strain Ueda107) (Pseudomonas fluorescens subsp. cellulosa).